The sequence spans 315 residues: Ribose-phosphate pyrophosphokinase (315 aa).

Residues 37–39 and 96–97 contribute to the ATP site; these read DGE and RQ. Residues histidine 131 and aspartate 170 each contribute to the Mg(2+) site. Lysine 194 is an active-site residue. Residues arginine 196, aspartate 220, and 224–228 contribute to the D-ribose 5-phosphate site; that span reads DTGGT.

This sequence belongs to the ribose-phosphate pyrophosphokinase family. Class I subfamily. In terms of assembly, homohexamer. Mg(2+) is required as a cofactor.

It localises to the cytoplasm. The catalysed reaction is D-ribose 5-phosphate + ATP = 5-phospho-alpha-D-ribose 1-diphosphate + AMP + H(+). It functions in the pathway metabolic intermediate biosynthesis; 5-phospho-alpha-D-ribose 1-diphosphate biosynthesis; 5-phospho-alpha-D-ribose 1-diphosphate from D-ribose 5-phosphate (route I): step 1/1. Its function is as follows. Involved in the biosynthesis of the central metabolite phospho-alpha-D-ribosyl-1-pyrophosphate (PRPP) via the transfer of pyrophosphoryl group from ATP to 1-hydroxyl of ribose-5-phosphate (Rib-5-P). The chain is Ribose-phosphate pyrophosphokinase from Salmonella typhi.